The primary structure comprises 90 residues: U7-theraphotoxin-Hhn1f (90 aa).

The first 19 residues, 1 to 19, serve as a signal peptide directing secretion; sequence MKTAIFTVVLALAVFAVLS. Residues 20-50 constitute a propeptide that is removed on maturation; that stretch reads FGWEANEKALSEEFTELIHEKEAASETEARG. Intrachain disulfides connect cysteine 51-cysteine 65, cysteine 58-cysteine 70, and cysteine 64-cysteine 81.

Belongs to the neurotoxin 10 (Hwtx-1) family. 13 (Hntx-13) subfamily. In terms of tissue distribution, expressed by the venom gland.

The protein resides in the secreted. Its function is as follows. Ion channel inhibitor. The polypeptide is U7-theraphotoxin-Hhn1f (Cyriopagopus hainanus (Chinese bird spider)).